We begin with the raw amino-acid sequence, 543 residues long: CTP synthase (543 aa).

Residues 1–266 (MKTNYIFVTG…DDYICERFSL (266 aa)) form an amidoligase domain region. Ser14 contributes to the CTP binding site. Ser14 provides a ligand contact to UTP. ATP is bound by residues 15–20 (SLGKGI) and Asp72. Mg(2+) contacts are provided by Asp72 and Glu140. CTP is bound by residues 147 to 149 (DIE), 187 to 192 (KTKPTQ), and Lys223. Residues 187–192 (KTKPTQ) and Lys223 contribute to the UTP site. 239–241 (KDV) lines the ATP pocket. Residues 291–538 (TVGIVGKYID…IKAASEYQKK (248 aa)) enclose the Glutamine amidotransferase type-1 domain. An L-glutamine-binding site is contributed by Gly352. The active-site Nucleophile; for glutamine hydrolysis is the Cys379. L-glutamine is bound by residues 380–383 (LGMQ), Glu403, and Arg466. Catalysis depends on residues His511 and Glu513.

The protein belongs to the CTP synthase family. Homotetramer.

It catalyses the reaction UTP + L-glutamine + ATP + H2O = CTP + L-glutamate + ADP + phosphate + 2 H(+). It carries out the reaction L-glutamine + H2O = L-glutamate + NH4(+). The catalysed reaction is UTP + NH4(+) + ATP = CTP + ADP + phosphate + 2 H(+). It participates in pyrimidine metabolism; CTP biosynthesis via de novo pathway; CTP from UDP: step 2/2. Allosterically activated by GTP, when glutamine is the substrate; GTP has no effect on the reaction when ammonia is the substrate. The allosteric effector GTP functions by stabilizing the protein conformation that binds the tetrahedral intermediate(s) formed during glutamine hydrolysis. Inhibited by the product CTP, via allosteric rather than competitive inhibition. Its function is as follows. Catalyzes the ATP-dependent amination of UTP to CTP with either L-glutamine or ammonia as the source of nitrogen. Regulates intracellular CTP levels through interactions with the four ribonucleotide triphosphates. This is CTP synthase from Baumannia cicadellinicola subsp. Homalodisca coagulata.